The following is a 92-amino-acid chain: Major allergen I polypeptide chain 1 (92 aa).

An N-terminal signal peptide occupies residues methionine 1–cysteine 22.

Belongs to the secretoglobin family. In terms of assembly, heterotetramer composed of two non-covalently linked disulfide-linked heterodimer of chains 1 and 2. In terms of tissue distribution, saliva and sebaceous glands.

Its subcellular location is the secreted. The chain is Major allergen I polypeptide chain 1 (CH1) from Felis catus (Cat).